Here is a 1717-residue protein sequence, read N- to C-terminus: Protein MON2 homolog (1717 aa).

Ser2 is modified (N-acetylserine). Phosphoserine occurs at positions 205 and 537. The interval 511–538 is disordered; it reads ETECQTTTEEGSSPTQSTEQQDLQSTSD. Residues 522–538 are compositionally biased toward polar residues; that stretch reads SSPTQSTEQQDLQSTSD.

It belongs to the MON2 family. In terms of assembly, homooligomer. Heterotrimer with ATP9A and DOP1B; this interaction is retromer-independent. Interacts with SNX3.

The protein resides in the early endosome membrane. Its function is as follows. Plays a role in regulating membrane trafficking of cargo proteins. Together with ATP9A and DOP1B, regulates SNX3 retromer-mediated endosomal sorting of WLS away from lysosomal degradation. The sequence is that of Protein MON2 homolog from Homo sapiens (Human).